We begin with the raw amino-acid sequence, 409 residues long: Peptidase T (409 aa).

Residue His-79 participates in Zn(2+) binding. Asp-81 is an active-site residue. Zn(2+) is bound at residue Asp-140. Glu-174 acts as the Proton acceptor in catalysis. Residues Glu-175, Asp-197, and His-379 each coordinate Zn(2+).

It belongs to the peptidase M20B family. The cofactor is Zn(2+).

It is found in the cytoplasm. It carries out the reaction Release of the N-terminal residue from a tripeptide.. In terms of biological role, cleaves the N-terminal amino acid of tripeptides. In Lysinibacillus sphaericus (strain C3-41), this protein is Peptidase T.